The primary structure comprises 300 residues: Ribosomal protein bS6--L-glutamate ligase (300 aa).

The 184-residue stretch at 104 to 287 (MQLLARQGID…IAGKMIRWIE (184 aa)) folds into the ATP-grasp domain. Residues Lys141, 178-179 (EY), Asp187, and 211-213 (RSN) contribute to the ATP site. Mg(2+) is bound by residues Asp248, Glu260, and Asn262. Mn(2+)-binding residues include Asp248, Glu260, and Asn262.

The protein belongs to the RimK family. The cofactor is Mg(2+). Requires Mn(2+) as cofactor.

An L-glutamate ligase that catalyzes the ATP-dependent post-translational addition of glutamate residues to the C-terminus of ribosomal protein bS6 (RpsF). Is also able to catalyze the synthesis of poly-alpha-glutamate in vitro, via ATP hydrolysis from unprotected glutamate as substrate. The number of glutamate residues added to either RpsF or to poly-alpha-glutamate changes with pH. In Shigella boydii serotype 4 (strain Sb227), this protein is Ribosomal protein bS6--L-glutamate ligase.